Reading from the N-terminus, the 179-residue chain is Diphosphoinositol polyphosphate phosphohydrolase 2 (179 aa).

Residues R9, 17–19 (KKR), and 38–40 (SSR) contribute to the substrate site. Positions 17–143 (KKRAACLCFR…VHAEYLEKLK (127 aa)) constitute a Nudix hydrolase domain. G49 and E65 together coordinate Mg(2+). The Nudix box signature appears at 50–71 (GGMEPEEEPGGAAVREVYEEAG). E68 acts as the Proton acceptor in catalysis. E69 contributes to the Mg(2+) binding site. Substrate contacts are provided by residues 88 to 90 (RKH), R114, and K132.

This sequence belongs to the Nudix hydrolase family. DIPP subfamily. The cofactor is Mg(2+). It depends on Mn(2+) as a cofactor.

It localises to the cytoplasm. The catalysed reaction is diphospho-myo-inositol polyphosphate + H2O = myo-inositol polyphosphate + phosphate.. It catalyses the reaction 5-diphospho-1D-myo-inositol 1,2,3,4,6-pentakisphosphate + H2O = 1D-myo-inositol hexakisphosphate + phosphate + H(+). It carries out the reaction 3,5-bis(diphospho)-1D-myo-inositol 1,2,4,6-tetrakisphosphate + H2O = 3-diphospho-1D-myo-inositol 1,2,4,5,6-pentakisphosphate + phosphate + 2 H(+). The enzyme catalyses 5-diphospho-1D-myo-inositol 1,3,4,6-tetrakisphosphate + H2O = 1D-myo-inositol 1,3,4,5,6-pentakisphosphate + phosphate + H(+). The catalysed reaction is P(1),P(6)-bis(5'-adenosyl) hexaphosphate + H2O = 2 ATP + 2 H(+). It catalyses the reaction P(1),P(5)-bis(5'-adenosyl) pentaphosphate + H2O = ADP + ATP + 2 H(+). It carries out the reaction 5-phospho-alpha-D-ribose 1-diphosphate + H2O = alpha-D-ribose 1,5-bisphosphate + phosphate + H(+). In terms of biological role, cleaves the beta-phosphate from diphosphoinositol polyphosphates such as PP-InsP5 (diphosphoinositol pentakisphosphate), PP-InsP4 (diphosphoinositol tetrakisphosphate) and [PP]2-InsP4 (bisdiphosphoinositol tetrakisphosphate), suggesting that it may play a role in signal transduction. Diadenosine polyphosphates, particularly Ap6A (P(1),P(6)-bis(5a-adenosyl) hexaphosphate) and Ap5A (P(1),P(5)-bis(5'-adenosyl) pentaphosphate) are downstream effectors of a signaling cascade that regulates cardiac KATP channels, can also be substrates, although with lower preference than the diphosphoinositol polyphosphates. Can also catalyze the hydrolysis of 5-phosphoribose 1-diphosphate, generating the glycolytic activator ribose 1,5-bisphosphate. Does not play a role in U8 snoRNA decapping activity. Binds U8 snoRNA. The polypeptide is Diphosphoinositol polyphosphate phosphohydrolase 2 (Mus musculus (Mouse)).